We begin with the raw amino-acid sequence, 549 residues long: S-methyl thiourocanate hydratase (549 aa).

The NAD(+) site is built by methionine 49, glycine 173, methionine 174, glycine 175, aspartate 193, serine 198, asparagine 239, alanine 240, glutamine 260, valine 270, and tyrosine 318.

It belongs to the urocanase family. S-methyl thiourocanate hydratase subfamily. The cofactor is NAD(+).

It carries out the reaction S-methyl-(E)-thiourocanate + H2O = S-methyl-thiohydantoin-5-propanoate. In terms of biological role, hydratase involved in the catabolism of S-methyl ergothioneine. Catalyzes the 1,4-addition of H(2)O to S-methyl thiourocanate, leading to the formation of S-methyl-thiohydantoin-5-propanoate, the second step in S-methyl ergothioneine degradation. Cannot use urocanate or thiourocanate as substrate. This chain is S-methyl thiourocanate hydratase, found in Variovorax sp. (strain JCM 16519 / RA8).